The following is a 193-amino-acid chain: Peptidyl-tRNA hydrolase (193 aa).

Tyr-16 contacts tRNA. The active-site Proton acceptor is His-21. The tRNA site is built by Phe-67, Asn-69, and Asn-115.

This sequence belongs to the PTH family. As to quaternary structure, monomer.

Its subcellular location is the cytoplasm. The catalysed reaction is an N-acyl-L-alpha-aminoacyl-tRNA + H2O = an N-acyl-L-amino acid + a tRNA + H(+). Its function is as follows. Hydrolyzes ribosome-free peptidyl-tRNAs (with 1 or more amino acids incorporated), which drop off the ribosome during protein synthesis, or as a result of ribosome stalling. Catalyzes the release of premature peptidyl moieties from peptidyl-tRNA molecules trapped in stalled 50S ribosomal subunits, and thus maintains levels of free tRNAs and 50S ribosomes. In Vesicomyosocius okutanii subsp. Calyptogena okutanii (strain HA), this protein is Peptidyl-tRNA hydrolase.